A 177-amino-acid polypeptide reads, in one-letter code: Large ribosomal subunit protein uL6 (177 aa).

This sequence belongs to the universal ribosomal protein uL6 family. As to quaternary structure, part of the 50S ribosomal subunit.

Its function is as follows. This protein binds to the 23S rRNA, and is important in its secondary structure. It is located near the subunit interface in the base of the L7/L12 stalk, and near the tRNA binding site of the peptidyltransferase center. The chain is Large ribosomal subunit protein uL6 from Mesorhizobium japonicum (strain LMG 29417 / CECT 9101 / MAFF 303099) (Mesorhizobium loti (strain MAFF 303099)).